The primary structure comprises 140 residues: Nucleoside diphosphate kinase (140 aa).

ATP contacts are provided by K11, F59, R87, T93, R104, and N114. Residue H117 is the Pros-phosphohistidine intermediate of the active site.

Belongs to the NDK family. Homotetramer. Requires Mg(2+) as cofactor.

It localises to the cytoplasm. It catalyses the reaction a 2'-deoxyribonucleoside 5'-diphosphate + ATP = a 2'-deoxyribonucleoside 5'-triphosphate + ADP. It carries out the reaction a ribonucleoside 5'-diphosphate + ATP = a ribonucleoside 5'-triphosphate + ADP. Functionally, major role in the synthesis of nucleoside triphosphates other than ATP. The ATP gamma phosphate is transferred to the NDP beta phosphate via a ping-pong mechanism, using a phosphorylated active-site intermediate. This is Nucleoside diphosphate kinase from Cereibacter sphaeroides (strain ATCC 17029 / ATH 2.4.9) (Rhodobacter sphaeroides).